The following is a 197-amino-acid chain: Phosphoheptose isomerase (197 aa).

An SIS domain is found at 36 to 197; that stretch reads MVNALLNEGK…IDSQLFGSEE (162 aa). Position 51–53 (51–53) interacts with substrate; it reads NGG. Residues H60 and E64 each contribute to the Zn(2+) site. Substrate-binding positions include E64, 93 to 94, 119 to 121, S124, and Q174; these read ND and STS. Zn(2+) contacts are provided by Q174 and H182.

This sequence belongs to the SIS family. GmhA subfamily. As to quaternary structure, homotetramer. It depends on Zn(2+) as a cofactor.

Its subcellular location is the cytoplasm. The catalysed reaction is 2 D-sedoheptulose 7-phosphate = D-glycero-alpha-D-manno-heptose 7-phosphate + D-glycero-beta-D-manno-heptose 7-phosphate. The protein operates within carbohydrate biosynthesis; D-glycero-D-manno-heptose 7-phosphate biosynthesis; D-glycero-alpha-D-manno-heptose 7-phosphate and D-glycero-beta-D-manno-heptose 7-phosphate from sedoheptulose 7-phosphate: step 1/1. Functionally, catalyzes the isomerization of sedoheptulose 7-phosphate in D-glycero-D-manno-heptose 7-phosphate. This is Phosphoheptose isomerase from Pseudomonas putida (strain W619).